A 470-amino-acid chain; its full sequence is Putative ankyrin repeat protein L279 (470 aa).

ANK repeat units follow at residues 119 to 148 (RDDYMLEWACAGNFTEVARYLLKIGANPGT), 149 to 178 (NKYACFESAVRNGNYDMVKLLLENIPGSDK), 372 to 401 (ETQGLLTNACQYNNSELVKYLLEKGANVNE), and 403 to 431 (NGKPLREAIKNNNKDIIKNLMDYSPDISL).

The sequence is that of Putative ankyrin repeat protein L279 from Acanthamoeba polyphaga (Amoeba).